A 301-amino-acid polypeptide reads, in one-letter code: Methionyl-tRNA formyltransferase (301 aa).

Residue 110 to 113 coordinates (6S)-5,6,7,8-tetrahydrofolate; it reads SLLP.

It belongs to the Fmt family.

The enzyme catalyses L-methionyl-tRNA(fMet) + (6R)-10-formyltetrahydrofolate = N-formyl-L-methionyl-tRNA(fMet) + (6S)-5,6,7,8-tetrahydrofolate + H(+). Its function is as follows. Attaches a formyl group to the free amino group of methionyl-tRNA(fMet). The formyl group appears to play a dual role in the initiator identity of N-formylmethionyl-tRNA by promoting its recognition by IF2 and preventing the misappropriation of this tRNA by the elongation apparatus. This is Methionyl-tRNA formyltransferase from Anaplasma phagocytophilum (strain HZ).